A 249-amino-acid chain; its full sequence is Putative TrmH family tRNA/rRNA methyltransferase (249 aa).

Glycine 196, isoleucine 216, and leucine 225 together coordinate S-adenosyl-L-methionine.

The protein belongs to the class IV-like SAM-binding methyltransferase superfamily. RNA methyltransferase TrmH family.

This Staphylococcus saprophyticus subsp. saprophyticus (strain ATCC 15305 / DSM 20229 / NCIMB 8711 / NCTC 7292 / S-41) protein is Putative TrmH family tRNA/rRNA methyltransferase.